Here is a 187-residue protein sequence, read N- to C-terminus: UPF0340 protein SPP_0683 (187 aa).

This sequence belongs to the UPF0340 family.

The sequence is that of UPF0340 protein SPP_0683 from Streptococcus pneumoniae (strain P1031).